The following is a 209-amino-acid chain: Small ribosomal subunit protein uS4 (209 aa).

The S4 RNA-binding domain occupies 98–164; the sequence is RRLDNVVYRL…LPVKNAIELN (67 aa).

The protein belongs to the universal ribosomal protein uS4 family. As to quaternary structure, part of the 30S ribosomal subunit. Contacts protein S5. The interaction surface between S4 and S5 is involved in control of translational fidelity.

Its function is as follows. One of the primary rRNA binding proteins, it binds directly to 16S rRNA where it nucleates assembly of the body of the 30S subunit. With S5 and S12 plays an important role in translational accuracy. The sequence is that of Small ribosomal subunit protein uS4 from Thermosipho africanus (strain TCF52B).